The chain runs to 103 residues: A-type ATP synthase subunit F (103 aa).

This sequence belongs to the V-ATPase F subunit family. In terms of assembly, has multiple subunits with at least A(3), B(3), C, D, E, F, H, I and proteolipid K(x).

It localises to the cell membrane. Component of the A-type ATP synthase that produces ATP from ADP in the presence of a proton gradient across the membrane. This chain is A-type ATP synthase subunit F, found in Pyrococcus furiosus (strain ATCC 43587 / DSM 3638 / JCM 8422 / Vc1).